Consider the following 509-residue polypeptide: Histidine--tRNA ligase, cytoplasmic (509 aa).

N-acetylalanine is present on alanine 2. The WHEP-TRS domain occupies 3–59; the sequence is DRAALEDLVRVQGERVRGLKQQKASAEQIEEEVAKLLKLKAQLGPDEGKPKFVLKTP. Serine 66 is subject to Phosphoserine. Residues 130 to 132, arginine 157, glutamine 173, aspartate 177, arginine 326, and 330 to 331 contribute to the L-histidine site; these read DLT and YY. Position 356 is a phosphoserine (serine 356).

This sequence belongs to the class-II aminoacyl-tRNA synthetase family. Homodimer.

The protein resides in the cytoplasm. It carries out the reaction tRNA(His) + L-histidine + ATP = L-histidyl-tRNA(His) + AMP + diphosphate + H(+). Its function is as follows. Catalyzes the ATP-dependent ligation of histidine to the 3'-end of its cognate tRNA, via the formation of an aminoacyl-adenylate intermediate (His-AMP). Plays a role in axon guidance. The chain is Histidine--tRNA ligase, cytoplasmic (HARS1) from Bos taurus (Bovine).